Here is a 335-residue protein sequence, read N- to C-terminus: uncharacterized protein (335 aa).

28–35 (GPINSGKT) contacts ATP.

The protein belongs to the archaeal ATPase family.

This is an uncharacterized protein from Pyrococcus abyssi (strain GE5 / Orsay).